Consider the following 670-residue polypeptide: DNA ligase (670 aa).

NAD(+) contacts are provided by residues 32-36 (DAEYD), 81-82 (SL), and Glu113. Lys115 functions as the N6-AMP-lysine intermediate in the catalytic mechanism. NAD(+) is bound by residues Arg136, Glu173, Lys290, and Lys314. Positions 406, 409, 424, and 430 each coordinate Zn(2+). Residues 592 to 670 (EIDSPFAGKT…EQEMMRLLGE (79 aa)) enclose the BRCT domain.

The protein belongs to the NAD-dependent DNA ligase family. LigA subfamily. Mg(2+) serves as cofactor. The cofactor is Mn(2+).

It carries out the reaction NAD(+) + (deoxyribonucleotide)n-3'-hydroxyl + 5'-phospho-(deoxyribonucleotide)m = (deoxyribonucleotide)n+m + AMP + beta-nicotinamide D-nucleotide.. In terms of biological role, DNA ligase that catalyzes the formation of phosphodiester linkages between 5'-phosphoryl and 3'-hydroxyl groups in double-stranded DNA using NAD as a coenzyme and as the energy source for the reaction. It is essential for DNA replication and repair of damaged DNA. The sequence is that of DNA ligase from Erwinia tasmaniensis (strain DSM 17950 / CFBP 7177 / CIP 109463 / NCPPB 4357 / Et1/99).